Here is a 172-residue protein sequence, read N- to C-terminus: Large ribosomal subunit protein uL10 (172 aa).

Belongs to the universal ribosomal protein uL10 family. Part of the ribosomal stalk of the 50S ribosomal subunit. The N-terminus interacts with L11 and the large rRNA to form the base of the stalk. The C-terminus forms an elongated spine to which L12 dimers bind in a sequential fashion forming a multimeric L10(L12)X complex.

Forms part of the ribosomal stalk, playing a central role in the interaction of the ribosome with GTP-bound translation factors. The sequence is that of Large ribosomal subunit protein uL10 (rplJ) from Brucella abortus biovar 1 (strain 9-941).